The following is a 1096-amino-acid chain: Serine-repeat antigen protein 3 (1096 aa).

An N-terminal signal peptide occupies residues 1-21; it reads MARLSSIVFIICLLLCNNAIS. Residues 28-205 are disordered; it reads PSSGGTLSGG…RSPPPQVNNI (178 aa). Residues 77–97 show a composition bias toward low complexity; it reads NSDSTGDSSLGSTGSNGSQPA. N92 carries an N-linked (GlcNAc...) asparagine glycan. Residues 102–113 are compositionally biased toward basic and acidic residues; the sequence is KEPEPTTPKEPE. Positions 123–147 are enriched in polar residues; the sequence is VTPQKTAETASGKQVSPTPSENPPS. The span at 149-161 shows a compositional bias: basic and acidic residues; sequence DTPKPESSSEKKV. N-linked (GlcNAc...) asparagine glycosylation is found at N204, N607, N637, N662, N671, N712, N892, and N951. 2 disordered regions span residues 916–952 and 964–1006; these read EAKNDDENDQNYGNLDVSGQSENHQNDPKNPQPQANS and NQRT…ASAN. 2 stretches are compositionally biased toward polar residues: residues 925–952 and 964–975; these read QNYGNLDVSGQSENHQNDPKNPQPQANS and NQRTADSNPNAQ. Residues 976–1006 show a composition bias toward low complexity; the sequence is STPSPNTTVTDTVNSNTANSNTANSNTASAN. Residues N981 and N1039 are each glycosylated (N-linked (GlcNAc...) asparagine).

This sequence belongs to the peptidase C1 family. Post-translationally, proteolytically cleaved in both blood and liver stage parasites. Precursor of 130 kDa is processed into 72 kDa and 55 kDa forms. Proteolytically cleaved by SUB1.

It localises to the cell membrane. It is found in the parasitophorous vacuole. The protein localises to the secreted. The protein resides in the host cytoplasm. Putative cysteine protease. Probably involved in merozoite release from the parasitophorous vacuole during liver stages. This is Serine-repeat antigen protein 3 from Plasmodium berghei (strain Anka).